Reading from the N-terminus, the 59-residue chain is Large ribosomal subunit protein uL30 (59 aa).

This sequence belongs to the universal ribosomal protein uL30 family. In terms of assembly, part of the 50S ribosomal subunit.

This is Large ribosomal subunit protein uL30 from Sodalis glossinidius (strain morsitans).